The following is a 107-amino-acid chain: uncharacterized protein (107 aa).

Positions 1 to 14 (MTERNASGRMNTKG) are enriched in polar residues. Residues 1 to 20 (MTERNASGRMNTKGRSIKET) form a disordered region.

It is found in the mitochondrion. This is an uncharacterized protein from Arabidopsis thaliana (Mouse-ear cress).